Reading from the N-terminus, the 125-residue chain is UPF0332 protein AF_0298 (125 aa).

Belongs to the UPF0332 family.

This chain is UPF0332 protein AF_0298, found in Archaeoglobus fulgidus (strain ATCC 49558 / DSM 4304 / JCM 9628 / NBRC 100126 / VC-16).